The sequence spans 679 residues: UvrABC system protein B (679 aa).

The Helicase ATP-binding domain maps to 31–414 (ENLTDGLAHQ…ELEKSGSEII (384 aa)). 44-51 (GVTGSGKT) is a binding site for ATP. Residues 97 to 120 (YYDYYQPEAYVPSSDTFIEKDASI) carry the Beta-hairpin motif. One can recognise a Helicase C-terminal domain in the interval 436–589 (QVDDLLSEAR…QTKYNEEHGI (154 aa)). The UVR domain maps to 639-674 (QQQIKKLEQQMYKFAQDLEFEKAAAIRDQLHQLREQ).

It belongs to the UvrB family. Forms a heterotetramer with UvrA during the search for lesions. Interacts with UvrC in an incision complex.

The protein resides in the cytoplasm. Its function is as follows. The UvrABC repair system catalyzes the recognition and processing of DNA lesions. A damage recognition complex composed of 2 UvrA and 2 UvrB subunits scans DNA for abnormalities. Upon binding of the UvrA(2)B(2) complex to a putative damaged site, the DNA wraps around one UvrB monomer. DNA wrap is dependent on ATP binding by UvrB and probably causes local melting of the DNA helix, facilitating insertion of UvrB beta-hairpin between the DNA strands. Then UvrB probes one DNA strand for the presence of a lesion. If a lesion is found the UvrA subunits dissociate and the UvrB-DNA preincision complex is formed. This complex is subsequently bound by UvrC and the second UvrB is released. If no lesion is found, the DNA wraps around the other UvrB subunit that will check the other stand for damage. The polypeptide is UvrABC system protein B (Haemophilus influenzae (strain ATCC 51907 / DSM 11121 / KW20 / Rd)).